The primary structure comprises 303 residues: Inner kinetochore subunit mal2 (303 aa).

It belongs to the CENP-O/MCM21 family. Component of the heterotetrameric kinetochore subcomplex COMA, which consists of fta2, fta7, mal2 and mis17. The COMA subcomplex is part of a larger constitutive centromere-associated network (CCAN) (also known as central kinetochore Sim4 complex in fission yeast), which is composed of at least cnl2, cnp3, cnp20, fta1, fta2, fta3, fta4, fta6, fta7, mal2, mhf1, mhf2, mis6, mis15, mis17, sim4 and wip1.

It localises to the nucleus. It is found in the chromosome. The protein localises to the centromere. Its subcellular location is the kinetochore. Its function is as follows. Component of the kinetochore, a multiprotein complex that assembles on centromeric DNA and attaches chromosomes to spindle microtubules, mediating chromosome segregation and sister chromatid segregation during meiosis and mitosis. Component of the inner kinetochore COMA complex, which connects centromere-associated proteins and the outer kinetochore. COMA interacts with other inner kinetochore proteins to form the inner kinetochore constitutive centromere-associated network (CCAN), which serves as a structural platform for outer kinetochore assembly. This is Inner kinetochore subunit mal2 (mal2) from Schizosaccharomyces pombe (strain 972 / ATCC 24843) (Fission yeast).